Consider the following 252-residue polypeptide: uncharacterized protein (252 aa).

Position 28–35 (28–35 (GCDGTGKS)) interacts with ATP.

The protein to E.coli YghS and YghT.

This is an uncharacterized protein from Escherichia coli O6:H1 (strain CFT073 / ATCC 700928 / UPEC).